We begin with the raw amino-acid sequence, 588 residues long: Histone-arginine methyltransferase CARM1 (588 aa).

In terms of domain architecture, SAM-dependent MTase PRMT-type spans alanine 120–valine 427. S-adenosyl-L-methionine is bound by residues glutamine 133, arginine 142, glycine 166, glutamate 188, glutamate 217, and serine 245. A transactivation domain region spans residues threonine 473 to serine 588.

The protein belongs to the class I-like SAM-binding methyltransferase superfamily. Protein arginine N-methyltransferase family. Homodimer.

Its subcellular location is the nucleus. The protein localises to the cytoplasm. The protein resides in the chromosome. It catalyses the reaction L-arginyl-[protein] + 2 S-adenosyl-L-methionine = N(omega),N(omega)-dimethyl-L-arginyl-[protein] + 2 S-adenosyl-L-homocysteine + 2 H(+). Functionally, methylates (mono- and asymmetric dimethylation) the guanidino nitrogens of arginyl residues in several proteins involved in DNA packaging, transcription regulation, pre-mRNA splicing, and mRNA stability. Recruited to promoters upon gene activation together with histone acetyltransferases from EP300/P300 and p160 families, methylates histone H3 at 'Arg-17' (H3R17me) and activates transcription via chromatin remodeling. The polypeptide is Histone-arginine methyltransferase CARM1 (carm1) (Danio rerio (Zebrafish)).